The primary structure comprises 197 residues: MSLGRLCRLLKPALLCGALAAPGLAGTMCASRDDWRCAGSMHEFSAKDIDGHMVNLDKYRGFVCIVTNVASQUGKTEVNYTQLVDLHARYAECGLRILAFPCNQFGKQEPGSNEEIKEFAAGYNVKFDMFSKICVNGDDAHPLWKWMKIQPKGKGILGNAIKWNFTKFLIDKNGCVVKRYGPMEEPQVIEKDLPHYF.

S40 is modified (phosphoserine). Residue U73 is part of the active site. U73 is a non-standard amino acid (selenocysteine).

The protein belongs to the glutathione peroxidase family. As to quaternary structure, monomer. Has a tendency to form higher mass oligomers. Interacts with FUNDC1; this interaction promotes GPX4 recruitment into mitochondria through TOM/TIM complex where it is degraded by mitophagy.

It is found in the mitochondrion. The protein localises to the cytoplasm. It carries out the reaction a hydroperoxy polyunsaturated fatty acid + 2 glutathione = a hydroxy polyunsaturated fatty acid + glutathione disulfide + H2O. It catalyses the reaction (12S)-hydroperoxy-(5Z,8Z,10E,14Z)-eicosatetraenoate + 2 glutathione = (12S)-hydroxy-(5Z,8Z,10E,14Z)-eicosatetraenoate + glutathione disulfide + H2O. The enzyme catalyses (13S)-hydroperoxy-(9Z,11E)-octadecadienoate + 2 glutathione = (13S)-hydroxy-(9Z,11E)-octadecadienoate + glutathione disulfide + H2O. Its function is as follows. Essential antioxidant peroxidase that directly reduces phospholipid hydroperoxide even if they are incorporated in membranes and lipoproteins. Can also reduce fatty acid hydroperoxide, cholesterol hydroperoxide and thymine hydroperoxide. Plays a key role in protecting cells from oxidative damage by preventing membrane lipid peroxidation. Required to prevent cells from ferroptosis, a non-apoptotic cell death resulting from an iron-dependent accumulation of lipid reactive oxygen species. The presence of selenocysteine (Sec) versus Cys at the active site is essential for life: it provides resistance to overoxidation and prevents cells against ferroptosis. The presence of Sec at the active site is also essential for the survival of a specific type of parvalbumin-positive interneurons, thereby preventing against fatal epileptic seizures. May be required to protect cells from the toxicity of ingested lipid hydroperoxides. Required for normal sperm development and male fertility. Essential for maturation and survival of photoreceptor cells. Plays a role in a primary T-cell response to viral and parasitic infection by protecting T-cells from ferroptosis and by supporting T-cell expansion. Plays a role of glutathione peroxidase in platelets in the arachidonic acid metabolism. Reduces hydroperoxy ester lipids formed by a 15-lipoxygenase that may play a role as down-regulator of the cellular 15-lipoxygenase pathway. In Sapajus apella (Brown-capped capuchin), this protein is Phospholipid hydroperoxide glutathione peroxidase.